The sequence spans 518 residues: Cytochrome P450 704C1 (518 aa).

2 helical membrane-spanning segments follow: residues 5-25 (ILTM…WIAS) and 299-319 (VILN…SWFI). Cys461 lines the heme pocket.

This sequence belongs to the cytochrome P450 family. The cofactor is heme.

It localises to the membrane. The polypeptide is Cytochrome P450 704C1 (CYP704C1) (Pinus taeda (Loblolly pine)).